Reading from the N-terminus, the 196-residue chain is Imidazoleglycerol-phosphate dehydratase (196 aa).

This sequence belongs to the imidazoleglycerol-phosphate dehydratase family.

The protein resides in the cytoplasm. The enzyme catalyses D-erythro-1-(imidazol-4-yl)glycerol 3-phosphate = 3-(imidazol-4-yl)-2-oxopropyl phosphate + H2O. It functions in the pathway amino-acid biosynthesis; L-histidine biosynthesis; L-histidine from 5-phospho-alpha-D-ribose 1-diphosphate: step 6/9. The polypeptide is Imidazoleglycerol-phosphate dehydratase (Oleidesulfovibrio alaskensis (strain ATCC BAA-1058 / DSM 17464 / G20) (Desulfovibrio alaskensis)).